A 1061-amino-acid polypeptide reads, in one-letter code: Eukaryotic translation initiation factor 3 subunit A (1061 aa).

The segment covering 114-126 (QSSIEATTGSSSV) has biased composition (polar residues). A disordered region spans residues 114–133 (QSSIEATTGSSSVEDLEASE). Positions 339 to 523 (LQKAATFVVL…GVLSFDVDVF (185 aa)) constitute a PCI domain. Coiled-coil stretches lie at residues 609–724 (EVIQ…KRLD) and 789–906 (RADL…AAAA). The span at 828 to 901 (REKREREEKE…EAMARRRAEK (74 aa)) shows a compositional bias: basic and acidic residues. Positions 828-1061 (REKREREEKE…KYVPKFRREG (234 aa)) are disordered. Pro residues-rich tracts occupy residues 950 to 962 (SGPP…PPPI) and 1000 to 1011 (APPPERSGPPPR).

Belongs to the eIF-3 subunit A family. Component of the eukaryotic translation initiation factor 3 (eIF-3) complex.

It is found in the cytoplasm. In terms of biological role, RNA-binding component of the eukaryotic translation initiation factor 3 (eIF-3) complex, which is involved in protein synthesis of a specialized repertoire of mRNAs and, together with other initiation factors, stimulates binding of mRNA and methionyl-tRNAi to the 40S ribosome. The eIF-3 complex specifically targets and initiates translation of a subset of mRNAs involved in cell proliferation. This Chaetomium globosum (strain ATCC 6205 / CBS 148.51 / DSM 1962 / NBRC 6347 / NRRL 1970) (Soil fungus) protein is Eukaryotic translation initiation factor 3 subunit A.